The chain runs to 90 residues: Cell division protein CrgA (90 aa).

The interval 1–26 (MPKAKVTKNSIAPVSSNPSANRTPVK) is disordered. Positions 7-26 (TKNSIAPVSSNPSANRTPVK) are enriched in polar residues. A run of 2 helical transmembrane segments spans residues 38–58 (VIMF…YLVG) and 69–89 (AWNY…TMGW).

It belongs to the CrgA family.

Its subcellular location is the cell membrane. Functionally, involved in cell division. The polypeptide is Cell division protein CrgA (Corynebacterium efficiens (strain DSM 44549 / YS-314 / AJ 12310 / JCM 11189 / NBRC 100395)).